Consider the following 1048-residue polypeptide: Platelet-derived growth factor receptor beta (1048 aa).

Positions 1 to 30 (MLRASAMRAAVLHLTVALAALLSSCTTVSC) are cleaved as a signal peptide. Topologically, residues 31 to 528 (LKIVPEEKQL…LVSSSLFSQV (498 aa)) are extracellular. The Ig-like C2-type 1 domain maps to 35 to 124 (PEEKQLILAE…EIKEVAVFVP (90 aa)). 2 disulfide bridges follow: Cys-52/Cys-108 and Cys-153/Cys-194. N-linked (GlcNAc...) asparagine glycosylation is found at Asn-87, Asn-159, Asn-224, and Asn-239. Ig-like C2-type domains lie at 216–309 (PEDI…ASVN) and 319–406 (AVKS…KEVT). Cys-240 and Cys-293 are disulfide-bonded. 3 N-linked (GlcNAc...) asparagine glycosylation sites follow: Asn-309, Asn-327, and Asn-457. A disulfide bridge links Cys-434 with Cys-503. The chain crosses the membrane as a helical span at residues 529-549 (VLLAVVLTLVPIIIMSIIILI). Over 550–1048 (AVWKKKPRYE…PIPDPKPEKS (499 aa)) the chain is Cytoplasmic. A phosphotyrosine; by autocatalysis mark is found at Tyr-558, Tyr-575, and Tyr-577. A Protein kinase domain is found at 596 to 957 (LVLGRTLGSG…FLVHCVGDML (362 aa)). Residues 602–610 (LGSGAFGRV) and Lys-630 contribute to the ATP site. Tyr-735, Tyr-746, Tyr-758, Tyr-766, and Tyr-770 each carry phosphotyrosine; by autocatalysis. Asp-821 (proton acceptor) is an active-site residue. Phosphotyrosine; by autocatalysis is present on residues Tyr-852 and Tyr-1036.

Belongs to the protein kinase superfamily. Tyr protein kinase family. CSF-1/PDGF receptor subfamily. In terms of assembly, interacts with homodimeric PDGFB and PDGFD, and with heterodimers formed by PDGFA and PDGFB. Monomer in the absence of bound ligand. Interaction with homodimeric PDGFB, heterodimers formed by PDGFA and PDGFB or homodimeric PDGFD, leads to receptor dimerization, where both PDGFRA homodimers and heterodimers with PDGFRB are observed. Ubiquitinated. After autophosphorylation, the receptor is polyubiquitinated, leading to its degradation. In terms of processing, autophosphorylated on tyrosine residues upon ligand binding. Autophosphorylation occurs in trans, i.e. one subunit of the dimeric receptor phosphorylates tyrosine residues on the other subunit.

The protein resides in the cell membrane. Its subcellular location is the cytoplasmic vesicle. It localises to the lysosome lumen. It carries out the reaction L-tyrosyl-[protein] + ATP = O-phospho-L-tyrosyl-[protein] + ADP + H(+). With respect to regulation, present in an inactive conformation in the absence of bound ligand. Binding of PDGFB and/or PDGFD leads to dimerization and activation by autophosphorylation on tyrosine residues. Functionally, tyrosine-protein kinase that acts as a cell-surface receptor for homodimeric PDGFB and PDGFD and for heterodimers formed by PDGFA and PDGFB, and plays an essential role in the regulation of embryonic development, cell proliferation, survival, differentiation, chemotaxis and migration. Plays an essential role in blood vessel development by promoting proliferation, migration and recruitment of pericytes and smooth muscle cells to endothelial cells. Required for normal development of the cardiovascular system. Required for normal recruitment of pericytes (mesangial cells) in the kidney glomerulus, and for normal formation of a branched network of capillaries in kidney glomeruli. Promotes rearrangement of the actin cytoskeleton and the formation of membrane ruffles. Binding of its cognate ligands - homodimeric PDGFB, heterodimers formed by PDGFA and PDGFB or homodimeric PDGFD -leads to the activation of several signaling cascades; the response depends on the nature of the bound ligand and is modulated by the formation of heterodimers between PDGFRA and PDGFRB. Receptor signaling is down-regulated by protein phosphatases that dephosphorylate the receptor and its down-stream effectors, and by rapid internalization of the activated receptor. The polypeptide is Platelet-derived growth factor receptor beta (pdgfrb) (Takifugu rubripes (Japanese pufferfish)).